A 473-amino-acid chain; its full sequence is Aspartyl/glutamyl-tRNA(Asn/Gln) amidotransferase subunit B (473 aa).

The protein belongs to the GatB/GatE family. GatB subfamily. In terms of assembly, heterotrimer of A, B and C subunits.

The catalysed reaction is L-glutamyl-tRNA(Gln) + L-glutamine + ATP + H2O = L-glutaminyl-tRNA(Gln) + L-glutamate + ADP + phosphate + H(+). The enzyme catalyses L-aspartyl-tRNA(Asn) + L-glutamine + ATP + H2O = L-asparaginyl-tRNA(Asn) + L-glutamate + ADP + phosphate + 2 H(+). Allows the formation of correctly charged Asn-tRNA(Asn) or Gln-tRNA(Gln) through the transamidation of misacylated Asp-tRNA(Asn) or Glu-tRNA(Gln) in organisms which lack either or both of asparaginyl-tRNA or glutaminyl-tRNA synthetases. The reaction takes place in the presence of glutamine and ATP through an activated phospho-Asp-tRNA(Asn) or phospho-Glu-tRNA(Gln). This is Aspartyl/glutamyl-tRNA(Asn/Gln) amidotransferase subunit B from Wolbachia pipientis subsp. Culex pipiens (strain wPip).